We begin with the raw amino-acid sequence, 157 residues long: Phosphomannomutase (157 aa).

S98 functions as the Phosphoserine intermediate in the catalytic mechanism. A Mg(2+)-binding site is contributed by S98.

This sequence belongs to the phosphohexose mutase family. Mg(2+) is required as a cofactor.

The catalysed reaction is alpha-D-mannose 1-phosphate = D-mannose 6-phosphate. It functions in the pathway nucleotide-sugar biosynthesis; GDP-alpha-D-mannose biosynthesis; alpha-D-mannose 1-phosphate from D-fructose 6-phosphate: step 2/2. It participates in capsule biogenesis; capsule polysaccharide biosynthesis. Functionally, involved in the biosynthesis of the K2 capsular polysaccharide biosynthesis. The polypeptide is Phosphomannomutase (manB) (Klebsiella pneumoniae).